The following is a 1450-amino-acid chain: Arf-GAP with Rho-GAP domain, ANK repeat and PH domain-containing protein 1 (1450 aa).

In terms of domain architecture, SAM spans 6–70; the sequence is DAALSVAEWL…LAGLLRAHTS (65 aa). Residues 81–90 are required for interaction with SH3KBP1; the sequence is PVPMKRHIFR. 2 disordered regions span residues 89 to 144 and 173 to 302; these read FRSP…LPPL and TKEE…SSLS. Positions 92-102 are enriched in pro residues; sequence PPVPATPPEPL. Residues 190–199 are compositionally biased toward low complexity; sequence QSEEPLSTLP. The segment covering 200–219 has biased composition (pro residues); sequence QGPPQPPSPPPCPPEIPPKP. Composition is skewed to acidic residues over residues 225 to 236 and 269 to 286; these read EFDDSDYDEVPE and EGEE…EDDH. Ser-229 is modified (phosphoserine). Position 231 is a phosphotyrosine; by PTK6 (Tyr-231). The PH 1 domain maps to 327–419; the sequence is PVIKAGWLDK…WMQALQQAMA (93 aa). Position 354 is a phosphothreonine (Thr-354). The residue at position 428 (Ser-428) is a Phosphoserine. Tyr-431 and Tyr-504 each carry phosphotyrosine. The PH 2 domain maps to 440–529; that stretch reads QPDRAGSLEL…WLEAMQGAIA (90 aa). The region spanning 535-660 is the Arf-GAP domain; sequence SEVAERIWAA…RYHPLFGNQE (126 aa). The C4-type zinc-finger motif lies at 550–576; it reads CADCGAPQPDWASINLCVVICKRCAGE. Residue Ser-738 is modified to Phosphoserine. Positions 743-850 constitute a PH 3 domain; that stretch reads TVSHSGFLYK…WVKCIAKAFV (108 aa). Residues 954-1139 enclose the Rho-GAP domain; the sequence is ASMGDTLSEQ…DLINHYVVVF (186 aa). Positions 1172-1261 constitute a Ras-associating domain; sequence GDFICTVYLE…SHLVVKKHQA (90 aa). In terms of domain architecture, PH 4 spans 1274-1396; that stretch reads GDTKHGMMKF…WFATFLFVQH (123 aa). Phosphoserine occurs at positions 1428 and 1435.

In terms of assembly, interacts with SH3KBP1/CIN85 (via SH3 domains). The interaction is independent of EGF and does not affect ARAP1 GTPase-activating activity but is involved in regulating ubiquitination and endocytic trafficking of EGFR. ARAP1 competes with E3 ubiquitin-protein ligase CBL for binding to SH3KBP1, preventing interaction of CBL with SH3KBP1; this is likely to regulate SH3KBP1-mediated internalization of EGFR. Interacts with TNFRSF10A. Post-translationally, phosphorylated by PTK6 following EGF stimulation which enhances EGFR signaling by delaying EGFR down-regulation; the interaction is mediated by the SH2 domain of PTK6. Phosphorylation promotes association with the Golgi apparatus and endosomes. In terms of tissue distribution, detected in heart, skeletal muscle, spleen, kidney, liver, placenta, lung, peripheral blood leukocytes, adrenal gland, bone marrow, brain, lymph node, mammary gland, prostate, spinal cord, stomach, thyroid and trachea.

It localises to the cytoplasm. The protein resides in the golgi apparatus. It is found in the trans-Golgi network. Its subcellular location is the golgi stack. The protein localises to the cell membrane. It localises to the endosome. The protein resides in the multivesicular body. It is found in the cell projection. Its subcellular location is the ruffle. The protein localises to the podosome. It localises to the early endosome. Phosphatidylinositol 3,4,5-trisphosphate-dependent GTPase-activating protein that modulates actin cytoskeleton remodeling by regulating ARF and RHO family members. Activated by phosphatidylinositol 3,4,5-trisphosphate (PtdIns(3,4,5)P3) binding and, to a lesser extent, by phosphatidylinositol 3,4-bisphosphate (PtdIns(3,4)P2) binding. Has a preference for ARF1 and ARF5. Positively regulates the ring size of circular dorsal ruffles and promotes macropinocytosis. Acts as a bridging factor in osteoclasts to control actin and membrane dynamics. Regulates the condensing of osteoclast podosomes into sealing zones which segregate the bone-facing membrane from other membrane domains and are required for osteoclast resorption activity. Also regulates recruitment of the AP-3 complex to endosomal membranes and trafficking of lysosomal membrane proteins to the ruffled membrane border of osteoclasts to modulate bone resorption. Regulates the endocytic trafficking of EGFR. Regulates the incorporation of CD63 and CD9 into multivesicular bodies. Required in the retinal pigment epithelium (RPE) for photoreceptor survival due to its role in promoting RPE phagocytosis. The sequence is that of Arf-GAP with Rho-GAP domain, ANK repeat and PH domain-containing protein 1 (ARAP1) from Homo sapiens (Human).